We begin with the raw amino-acid sequence, 248 residues long: Lysine-rich arabinogalactan protein 19 (248 aa).

An N-terminal signal peptide occupies residues 1 to 24 (MESNSIIWSLLLASALISSFSVNA). Over residues 25 to 37 (QGPAASPVTSTTT) the composition is skewed to low complexity. Positions 25–221 (QGPAASPVTS…APSPNTNGGN (197 aa)) are disordered. Composition is skewed to pro residues over residues 38 to 57 (APPP…PTTT), 67 to 86 (PASP…PAPK), and 94 to 171 (ATPP…PAPA). Residues 173 to 187 (TKHKRKHKHKRHHHA) show a composition bias toward basic residues. Pro residues predominate over residues 189–203 (APAPIPPSPPSPPVL). Serine 196 is lipidated: GPI-anchor amidated serine. A propeptide spans 197–248 (PPSPPVLTDPQDTAPAPSPNTNGGNALNQLKGRAVMWLNTGLVILFLLAMTA) (removed in mature form).

The protein belongs to the lysine-rich AGP family. O-glycosylated on the hydroxyproline residues. Strongly expressed in stems, moderately expressed in flowers and roots and weakly expressed in young leaves.

It is found in the cell membrane. Its function is as follows. Proteoglycan that seems to be implicated in diverse developmental roles such as differentiation, cell-cell recognition, embryogenesis and programmed cell death. The polypeptide is Lysine-rich arabinogalactan protein 19 (AGP19) (Arabidopsis thaliana (Mouse-ear cress)).